The sequence spans 149 residues: Calmodulin-1 (149 aa).

Residue A2 is modified to N-acetylalanine. EF-hand domains lie at 8-43 (EQIA…LGQN), 44-79 (PTEA…KMKD), 81-116 (DSEE…LGEK), and 117-149 (LTDE…MLAK). Ca(2+)-binding residues include D21, D23, D25, C27, E32, D57, D59, N61, T63, E68, D94, D96, N98, and E105. An N6,N6,N6-trimethyllysine modification is found at K116. Residues D130, D132, D134, Q136, and E141 each coordinate Ca(2+).

It belongs to the calmodulin family. In terms of tissue distribution, high expression in stolon tips and stems, moderate in roots, and very low in leaves. Localized in the meristematic regions of the shoot and root tips, the tip of the developing tuber and the vascular zones of petiole and tuber. Not detected in mesophyll cells.

Its function is as follows. Calmodulin mediates the control of a large number of enzymes, ion channels and other proteins by Ca(2+). Among the enzymes to be stimulated by the calmodulin-Ca(2+) complex are a number of protein kinases and phosphatases. This chain is Calmodulin-1 (PCM1), found in Solanum tuberosum (Potato).